A 267-amino-acid polypeptide reads, in one-letter code: Diphthine synthase (267 aa).

S-adenosyl-L-methionine contacts are provided by residues Leu9, Asp85, Val88, 113–114, Leu170, Ala211, and His236; that span reads SI.

Belongs to the diphthine synthase family. As to quaternary structure, homodimer.

The catalysed reaction is 2-[(3S)-amino-3-carboxypropyl]-L-histidyl-[translation elongation factor 2] + 3 S-adenosyl-L-methionine = diphthine-[translation elongation factor 2] + 3 S-adenosyl-L-homocysteine + 3 H(+). Its pathway is protein modification; peptidyl-diphthamide biosynthesis. Its function is as follows. S-adenosyl-L-methionine-dependent methyltransferase that catalyzes the trimethylation of the amino group of the modified target histidine residue in translation elongation factor 2 (EF-2), to form an intermediate called diphthine. The three successive methylation reactions represent the second step of diphthamide biosynthesis. This chain is Diphthine synthase, found in Methanococcoides burtonii (strain DSM 6242 / NBRC 107633 / OCM 468 / ACE-M).